Reading from the N-terminus, the 574-residue chain is Isocitrate dehydrogenase kinase/phosphatase (574 aa).

ATP is bound by residues Ala-315–Met-321 and Lys-336. Asp-371 is an active-site residue.

Belongs to the AceK family.

Its subcellular location is the cytoplasm. It catalyses the reaction L-seryl-[isocitrate dehydrogenase] + ATP = O-phospho-L-seryl-[isocitrate dehydrogenase] + ADP + H(+). Functionally, bifunctional enzyme which can phosphorylate or dephosphorylate isocitrate dehydrogenase (IDH) on a specific serine residue. This is a regulatory mechanism which enables bacteria to bypass the Krebs cycle via the glyoxylate shunt in response to the source of carbon. When bacteria are grown on glucose, IDH is fully active and unphosphorylated, but when grown on acetate or ethanol, the activity of IDH declines drastically concomitant with its phosphorylation. The chain is Isocitrate dehydrogenase kinase/phosphatase from Escherichia coli (strain SMS-3-5 / SECEC).